The following is a 376-amino-acid chain: MCFPLPSNSFKTMTDLDYMRRAIALAKQGLGWTNPNPLVGCVIVKNGEIVAEGYHEKIGGWHAERNAVLHCKEDLSGATAYVTLEPCCHHGRTPPCSDLLIERGIKKVFIGSSDPNPLVAGRGANQLRQAGVEVVEGLLKEECDALNPIFFHYIQTKRPYVLMKYAMTADGKIATGSGESKWITGESARARVQQTRHQYSAIMVGVDTVLADNPMLNSRMPNAKQPVRIVCDSQLRTPLDCQLVQTAKEYRTVIATVSDDLQKIEQFRPLGVDVLVCKARNKRVDLQDLLQKLGEMQIDSLLLEGGSSLNFSALESGIVNRVHCYIAPKLVGGKQAKTPIGGEGIQQIDQAVKLKLKSTELIGEDILLDYVVISPL.

Residues 1 to 157 (MCFPLPSNSF…PIFFHYIQTK (157 aa)) form a deaminase region. The CMP/dCMP-type deaminase domain maps to 13 to 135 (MTDLDYMRRA…QLRQAGVEVV (123 aa)). Histidine 62 is a Zn(2+) binding site. Catalysis depends on glutamate 64, which acts as the Proton donor. Zn(2+)-binding residues include cysteine 87 and cysteine 96. The reductase stretch occupies residues 158–376 (RPYVLMKYAM…LLDYVVISPL (219 aa)). Position 166 (alanine 166) interacts with NADP(+). A substrate-binding site is contributed by serine 180. Tryptophan 182 contacts NADP(+). Arginine 196 is a binding site for substrate. Residues threonine 208 and aspartate 212 each coordinate NADP(+). 2 residues coordinate substrate: leucine 216 and arginine 219. Residue serine 233 coordinates NADP(+). Glutamate 304 serves as a coordination point for substrate. 306 to 312 (GSSLNFS) contributes to the NADP(+) binding site.

This sequence in the N-terminal section; belongs to the cytidine and deoxycytidylate deaminase family. It in the C-terminal section; belongs to the HTP reductase family. Zn(2+) serves as cofactor.

It catalyses the reaction 2,5-diamino-6-hydroxy-4-(5-phosphoribosylamino)-pyrimidine + H2O + H(+) = 5-amino-6-(5-phospho-D-ribosylamino)uracil + NH4(+). It carries out the reaction 5-amino-6-(5-phospho-D-ribitylamino)uracil + NADP(+) = 5-amino-6-(5-phospho-D-ribosylamino)uracil + NADPH + H(+). It functions in the pathway cofactor biosynthesis; riboflavin biosynthesis; 5-amino-6-(D-ribitylamino)uracil from GTP: step 2/4. It participates in cofactor biosynthesis; riboflavin biosynthesis; 5-amino-6-(D-ribitylamino)uracil from GTP: step 3/4. In terms of biological role, converts 2,5-diamino-6-(ribosylamino)-4(3h)-pyrimidinone 5'-phosphate into 5-amino-6-(ribosylamino)-2,4(1h,3h)-pyrimidinedione 5'-phosphate. The chain is Riboflavin biosynthesis protein RibD (ribD) from Actinobacillus pleuropneumoniae (Haemophilus pleuropneumoniae).